A 183-amino-acid polypeptide reads, in one-letter code: Large ribosomal subunit protein uL6 (183 aa).

Belongs to the universal ribosomal protein uL6 family. As to quaternary structure, part of the 50S ribosomal subunit.

In terms of biological role, this protein binds to the 23S rRNA, and is important in its secondary structure. It is located near the subunit interface in the base of the L7/L12 stalk, and near the tRNA binding site of the peptidyltransferase center. In Chlamydia trachomatis serovar L2 (strain ATCC VR-902B / DSM 19102 / 434/Bu), this protein is Large ribosomal subunit protein uL6.